Consider the following 1005-residue polypeptide: PDZ domain-containing protein 7 (1005 aa).

2 consecutive PDZ domains span residues Ser-86 to Arg-168 and Ile-210 to Arg-293. Disordered stretches follow at residues Pro-353 to Gly-378, Val-700 to Ser-859, and Val-949 to Leu-1005. The segment covering Ala-770–Ser-786 has biased composition (basic residues). The segment covering Ser-787 to Pro-799 has biased composition (low complexity). Residues Pro-989–Pro-998 show a composition bias toward pro residues.

As to quaternary structure, homodimerizes (via PDZ2 domain). Component of USH2 complex, composed of ADGRV1, PDZD7, USH2A and WHRN. Interacts (via PDZ domains) with WHRN; the interaction is direct. Interacts with USH1G. Interacts with ADGRV1 (via the cytoplasmic region). Interacts with USH2A (via the cytoplasmic region). Interacts with MYO7A (via MyTH4-FERM domains).

It localises to the cell projection. The protein localises to the cilium. The protein resides in the nucleus. Its subcellular location is the stereocilium. Functionally, in cochlear developing hair cells, essential in organizing the USH2 complex at stereocilia ankle links. Blocks inhibition of adenylate cyclase activity mediated by ADGRV1. The polypeptide is PDZ domain-containing protein 7 (PDZD7) (Pongo abelii (Sumatran orangutan)).